Here is a 274-residue protein sequence, read N- to C-terminus: Sulfur carrier protein FdhD (274 aa).

The active-site Cysteine persulfide intermediate is Cys-121. 258–263 (FSKPGR) is a binding site for Mo-bis(molybdopterin guanine dinucleotide).

This sequence belongs to the FdhD family.

It localises to the cytoplasm. Required for formate dehydrogenase (FDH) activity. Acts as a sulfur carrier protein that transfers sulfur from IscS to the molybdenum cofactor prior to its insertion into FDH. The polypeptide is Sulfur carrier protein FdhD (Yersinia pseudotuberculosis serotype IB (strain PB1/+)).